The chain runs to 220 residues: Deoxyribose-phosphate aldolase (220 aa).

Aspartate 89 functions as the Proton donor/acceptor in the catalytic mechanism. The active-site Schiff-base intermediate with acetaldehyde is lysine 151. The active-site Proton donor/acceptor is lysine 180.

This sequence belongs to the DeoC/FbaB aldolase family. DeoC type 1 subfamily.

Its subcellular location is the cytoplasm. The enzyme catalyses 2-deoxy-D-ribose 5-phosphate = D-glyceraldehyde 3-phosphate + acetaldehyde. The protein operates within carbohydrate degradation; 2-deoxy-D-ribose 1-phosphate degradation; D-glyceraldehyde 3-phosphate and acetaldehyde from 2-deoxy-alpha-D-ribose 1-phosphate: step 2/2. Functionally, catalyzes a reversible aldol reaction between acetaldehyde and D-glyceraldehyde 3-phosphate to generate 2-deoxy-D-ribose 5-phosphate. The chain is Deoxyribose-phosphate aldolase from Streptococcus sanguinis (strain SK36).